We begin with the raw amino-acid sequence, 510 residues long: NAD(P)H-quinone oxidoreductase subunit 2, chloroplastic (510 aa).

Transmembrane regions (helical) follow at residues 24-44 (LLLF…GLIL), 59-79 (WFYF…LFRW), 99-119 (IFQF…VEYI), 124-144 (MAIT…MFLC), 149-169 (LITI…LSGY), 183-203 (YLLM…WLYG), 229-249 (ISIA…PAPF), 295-315 (WHLL…LIAI), 323-343 (MLAY…IVGD), 354-374 (YMLF…SFGL), 395-415 (ALSL…AGFF), 418-438 (LYLF…MGLL), and 484-504 (MTVC…ILAI).

The protein belongs to the complex I subunit 2 family. In terms of assembly, NDH is composed of at least 16 different subunits, 5 of which are encoded in the nucleus.

Its subcellular location is the plastid. It localises to the chloroplast thylakoid membrane. It catalyses the reaction a plastoquinone + NADH + (n+1) H(+)(in) = a plastoquinol + NAD(+) + n H(+)(out). It carries out the reaction a plastoquinone + NADPH + (n+1) H(+)(in) = a plastoquinol + NADP(+) + n H(+)(out). Functionally, NDH shuttles electrons from NAD(P)H:plastoquinone, via FMN and iron-sulfur (Fe-S) centers, to quinones in the photosynthetic chain and possibly in a chloroplast respiratory chain. The immediate electron acceptor for the enzyme in this species is believed to be plastoquinone. Couples the redox reaction to proton translocation, and thus conserves the redox energy in a proton gradient. In Sisyrinchium montanum (Strict blue-eyed grass), this protein is NAD(P)H-quinone oxidoreductase subunit 2, chloroplastic.